The sequence spans 880 residues: Valine--tRNA ligase (880 aa).

The short motif at 51 to 61 (PNVTGELHLGH) is the 'HIGH' region element. The 'KMSKS' region signature appears at 529–533 (KMSKT). Residue Lys-532 coordinates ATP. A coiled-coil region spans residues 815 to 854 (MSTMVDLEAEAKRVEAEIAELETQIERLSARLSDTQFLAK).

The protein belongs to the class-I aminoacyl-tRNA synthetase family. ValS type 1 subfamily. As to quaternary structure, monomer.

The protein localises to the cytoplasm. It catalyses the reaction tRNA(Val) + L-valine + ATP = L-valyl-tRNA(Val) + AMP + diphosphate. In terms of biological role, catalyzes the attachment of valine to tRNA(Val). As ValRS can inadvertently accommodate and process structurally similar amino acids such as threonine, to avoid such errors, it has a 'posttransfer' editing activity that hydrolyzes mischarged Thr-tRNA(Val) in a tRNA-dependent manner. The protein is Valine--tRNA ligase of Dehalococcoides mccartyi (strain ATCC BAA-2266 / KCTC 15142 / 195) (Dehalococcoides ethenogenes (strain 195)).